Reading from the N-terminus, the 435-residue chain is UDP-glucuronic acid decarboxylase 1 (435 aa).

The interval 1–33 (MKQLHKQMSSKRDEETIPMSQSSPYSPKTLKHP) is disordered. Residues 1-48 (MKQLHKQMSSKRDEETIPMSQSSPYSPKTLKHPRSLPRSLHYLFREQR) are Cytoplasmic-facing. The helical; Signal-anchor for type II membrane protein transmembrane segment at 49 to 69 (LLFILVGILIGSTFFILQPSL) threads the bilayer. Topologically, residues 70-435 (SRLGAAESTS…ILNEDEGKGL (366 aa)) are lumenal. The span at 91–100 (DSPPSRSTFN) shows a compositional bias: polar residues. Residues 91-110 (DSPPSRSTFNSGGGGGRTGR) are disordered. NAD(+) contacts are provided by Gly129, Phe130, Val131, Asp150, Asn151, Phe153, Thr154, Gly155, Asp175, and Val176. Ile180 lines the UDP-alpha-D-glucuronate pocket. Leu190 is an NAD(+) binding site. Lys208 contributes to the UDP-alpha-D-glucuronate binding site. Residue Thr209 participates in NAD(+) binding. Residues Asn216, Gly219, Lys222, and Arg223 each coordinate UDP-alpha-D-glucuronate. The NAD(+) site is built by Tyr262 and Lys266. The active-site Proton acceptor is Tyr262. Tyr276 contacts UDP-alpha-D-glucuronate. NAD(+) is bound by residues Thr292 and Arg303. The interval 380–401 (EFKPNTADDPHKRKPDISKAKE) is disordered. The segment covering 385–401 (TADDPHKRKPDISKAKE) has biased composition (basic and acidic residues).

This sequence belongs to the NAD(P)-dependent epimerase/dehydratase family. UDP-glucuronic acid decarboxylase subfamily. NAD(+) serves as cofactor. Ubiquitous.

It is found in the golgi apparatus. The protein localises to the golgi stack membrane. The catalysed reaction is UDP-alpha-D-glucuronate + H(+) = UDP-alpha-D-xylose + CO2. The protein operates within nucleotide-sugar biosynthesis; UDP-alpha-D-xylose biosynthesis; UDP-alpha-D-xylose from UDP-alpha-D-glucuronate: step 1/1. In terms of biological role, catalyzes the NAD-dependent decarboxylation of UDP-glucuronic acid to UDP-xylose. Necessary for the biosynthesis of the core tetrasaccharide in glycosaminoglycan biosynthesis. This is UDP-glucuronic acid decarboxylase 1 from Arabidopsis thaliana (Mouse-ear cress).